A 225-amino-acid chain; its full sequence is MDSLTSILTPIHREGHRFAIIFAAVTIVLFLIWNPLGWIGVILTLWCLYFFRDPDRVTPTREGLVVSPADGIVNLITEASPPEELGLGDMVRTRVSIFMNVFNCHVNRAPVAGTVKRVAYRPGLFLNADLDKASDANERNSLLIERADGEQIVVVQIAGLVARRIVCDVREGHDLAAGERFGIIRFGSRLDVYLPVGAIPLVAVGQTAIAGETVLADSISVLPQV.

The Schiff-base intermediate with substrate; via pyruvic acid role is filled by serine 188. Serine 188 is subject to Pyruvic acid (Ser); by autocatalysis.

Belongs to the phosphatidylserine decarboxylase family. PSD-A subfamily. In terms of assembly, heterodimer of a large membrane-associated beta subunit and a small pyruvoyl-containing alpha subunit. The cofactor is pyruvate. In terms of processing, is synthesized initially as an inactive proenzyme. Formation of the active enzyme involves a self-maturation process in which the active site pyruvoyl group is generated from an internal serine residue via an autocatalytic post-translational modification. Two non-identical subunits are generated from the proenzyme in this reaction, and the pyruvate is formed at the N-terminus of the alpha chain, which is derived from the carboxyl end of the proenzyme. The post-translation cleavage follows an unusual pathway, termed non-hydrolytic serinolysis, in which the side chain hydroxyl group of the serine supplies its oxygen atom to form the C-terminus of the beta chain, while the remainder of the serine residue undergoes an oxidative deamination to produce ammonia and the pyruvoyl prosthetic group on the alpha chain.

Its subcellular location is the cell membrane. It carries out the reaction a 1,2-diacyl-sn-glycero-3-phospho-L-serine + H(+) = a 1,2-diacyl-sn-glycero-3-phosphoethanolamine + CO2. It functions in the pathway phospholipid metabolism; phosphatidylethanolamine biosynthesis; phosphatidylethanolamine from CDP-diacylglycerol: step 2/2. In terms of biological role, catalyzes the formation of phosphatidylethanolamine (PtdEtn) from phosphatidylserine (PtdSer). The chain is Phosphatidylserine decarboxylase proenzyme from Parvibaculum lavamentivorans (strain DS-1 / DSM 13023 / NCIMB 13966).